A 355-amino-acid chain; its full sequence is UDP-N-acetylglucosamine--N-acetylmuramyl-(pentapeptide) pyrophosphoryl-undecaprenol N-acetylglucosamine transferase (355 aa).

UDP-N-acetyl-alpha-D-glucosamine contacts are provided by residues T15–G17, N127, R163, S191, I244, A263–E268, and Q288.

The protein belongs to the glycosyltransferase 28 family. MurG subfamily.

The protein resides in the cell inner membrane. The enzyme catalyses di-trans,octa-cis-undecaprenyl diphospho-N-acetyl-alpha-D-muramoyl-L-alanyl-D-glutamyl-meso-2,6-diaminopimeloyl-D-alanyl-D-alanine + UDP-N-acetyl-alpha-D-glucosamine = di-trans,octa-cis-undecaprenyl diphospho-[N-acetyl-alpha-D-glucosaminyl-(1-&gt;4)]-N-acetyl-alpha-D-muramoyl-L-alanyl-D-glutamyl-meso-2,6-diaminopimeloyl-D-alanyl-D-alanine + UDP + H(+). It functions in the pathway cell wall biogenesis; peptidoglycan biosynthesis. In terms of biological role, cell wall formation. Catalyzes the transfer of a GlcNAc subunit on undecaprenyl-pyrophosphoryl-MurNAc-pentapeptide (lipid intermediate I) to form undecaprenyl-pyrophosphoryl-MurNAc-(pentapeptide)GlcNAc (lipid intermediate II). The protein is UDP-N-acetylglucosamine--N-acetylmuramyl-(pentapeptide) pyrophosphoryl-undecaprenol N-acetylglucosamine transferase of Salmonella enteritidis PT4 (strain P125109).